The following is a 335-amino-acid chain: MLRLSLLRSTATLPVKCQRRGLILPAAAMYTLGSLIFGKEARLADAMERGELHNKNVDYAKEAEERTELRIRALANTRSMEPRYNGHVPLHRYEKLLLFAISGWNSFFHPEDGYNIVQLGEATALPVFLENLKQTMLSDSSGRRILKEQPNITTEILHMDKLAKLPHNTFGYVYYQWLKRENVSPDTRAPVKFIDDPMHAYIFKRYRQCHDFYHAITNMPIIIEGEITIKALEGANLGVPMAILGGILAPLRLKKVQRKRLYNIYLPWAVRTGLSCKPLINVYWEEMLEKDVTALRKELKITLPPDLRTMRKERAALRKEIDAKYNSQKRATTPA.

The N-terminal 10 residues, 1–10, are a transit peptide targeting the mitochondrion; that stretch reads MLRLSLLRST. 4 residues coordinate Zn(2+): His210, Asp211, His214, and Glu226.

The protein belongs to the COQ4 family. In terms of assembly, component of a multi-subunit COQ enzyme complex, composed of at least COQ3, COQ4, COQ5, COQ6, COQ7 and COQ9. Interacts with COQ3. Zn(2+) is required as a cofactor.

It is found in the mitochondrion inner membrane. The catalysed reaction is 4-hydroxy-3-methoxy-5-(all-trans-hexaprenyl)benzoate + H(+) = 2-methoxy-6-(all-trans-hexaprenyl)phenol + CO2. The protein operates within cofactor biosynthesis; ubiquinone biosynthesis. Its function is as follows. Lyase that catalyzes the C1-decarboxylation of 4-hydroxy-3-methoxy-5-(all-trans-hexaprenyl)benzoic acid into 2-methoxy-6-(all-trans-hexaprenyl)phenol during ubiquinone biosynthesis. In Saccharomyces cerevisiae (strain YJM789) (Baker's yeast), this protein is Ubiquinone biosynthesis protein COQ4, mitochondrial.